A 604-amino-acid chain; its full sequence is Afamin (604 aa).

The N-terminal stretch at 1 to 21 (MKQLKLTGFVIFFFFLTESLT) is a signal peptide. Albumin domains are found at residues 22–210 (LPTQ…EPFI), 211–403 (YYLK…RFNE), and 404–598 (TTEK…PKLA). Cystine bridges form between cysteine 77/cysteine 86, cysteine 99/cysteine 114, cysteine 113/cysteine 124, cysteine 148/cysteine 193, cysteine 192/cysteine 201, cysteine 224/cysteine 270, cysteine 269/cysteine 277, cysteine 289/cysteine 303, cysteine 302/cysteine 313, cysteine 340/cysteine 385, cysteine 384/cysteine 393, cysteine 416/cysteine 462, cysteine 461/cysteine 470, cysteine 483/cysteine 499, cysteine 498/cysteine 509, cysteine 536/cysteine 581, and cysteine 580/cysteine 589. The N-linked (GlcNAc...) asparagine glycan is linked to asparagine 109. Residues 215 to 319 (ALSSYQKNAC…RGECIIYSNK (105 aa)) form a binding pocket for hydrophobic ligands region. An N-linked (GlcNAc...) asparagine glycan is attached at asparagine 434.

The protein belongs to the ALB/AFP/VDB family. In terms of assembly, forms a 1:1 complex with Wnt family members; interacts with WNT3A and WNT5A. Interacts with WNT1, WNT2B, WNT3, WNT7A, WNT7B, WNT8, WNT9A, WNT9B, WNT10A and WNT10B. N-glycosylated; more than 90% of the glycans are sialylated.

The protein resides in the secreted. Its function is as follows. Functions as a carrier for hydrophobic molecules in body fluids. Essential for the solubility and activity of lipidated Wnt family members, including WNT1, WNT2B, WNT3, WNT3A, WNT5A, WNT7A, WNT7B, WNT8, WNT9A, WNT9B, WNT10A and WNT10B. Binds vitamin E. May transport vitamin E in body fluids under conditions where the lipoprotein system is not sufficient. May be involved in the transport of vitamin E across the blood-brain barrier. In Bos taurus (Bovine), this protein is Afamin (AFM).